A 301-amino-acid chain; its full sequence is MDKVIATPGGTNEIIRKYNLKLHKGLGQNFLIDQNIVDKIINTADLNNEDIVIEIGPGIGSLTQKIVPRSGRVFAFEKDKRLVKVLRELFNGYNHLEVIGQDVLEVDWKHFFDSRGISDRSVKVLANLPYYITTPVIMGLLESNITFSLMVLMVQKEVADRMAAAPGSKDYGALSVAVQYYGEVEIFHKVPPTVFIPRPRVYSSIIKIKPHSEPVYRVKNEGFFFKMVRAIFQQRRKTLKNSLTKSSEIKLDKGIVTEAIRELGLDPRIRGEKLTIKQMAILSNTLWYKISEEDGENHEIY.

S-adenosyl-L-methionine is bound by residues asparagine 29, leucine 31, glycine 56, glutamate 77, aspartate 102, and asparagine 127.

This sequence belongs to the class I-like SAM-binding methyltransferase superfamily. rRNA adenine N(6)-methyltransferase family. RsmA subfamily.

Its subcellular location is the cytoplasm. It carries out the reaction adenosine(1518)/adenosine(1519) in 16S rRNA + 4 S-adenosyl-L-methionine = N(6)-dimethyladenosine(1518)/N(6)-dimethyladenosine(1519) in 16S rRNA + 4 S-adenosyl-L-homocysteine + 4 H(+). In terms of biological role, specifically dimethylates two adjacent adenosines (A1518 and A1519) in the loop of a conserved hairpin near the 3'-end of 16S rRNA in the 30S particle. May play a critical role in biogenesis of 30S subunits. The protein is Ribosomal RNA small subunit methyltransferase A of Halothermothrix orenii (strain H 168 / OCM 544 / DSM 9562).